Reading from the N-terminus, the 715-residue chain is Fatty acid oxidation complex subunit alpha (715 aa).

Positions 1–190 are enoyl-CoA hydratase/isomerase; sequence MIYQGKAITV…KVGAVDAVVA (190 aa). Asp297 is a binding site for substrate. Residues 312–715 are 3-hydroxyacyl-CoA dehydrogenase; that stretch reads KDVKLAAVLG…MAKNGQKFFG (404 aa). NAD(+)-binding positions include Met325, Asp344, 401–403, Lys408, and Ser430; that span reads VVE. His451 acts as the For 3-hydroxyacyl-CoA dehydrogenase activity in catalysis. Position 454 (Asn454) interacts with NAD(+). 2 residues coordinate substrate: Asn501 and Tyr660.

In the N-terminal section; belongs to the enoyl-CoA hydratase/isomerase family. It in the C-terminal section; belongs to the 3-hydroxyacyl-CoA dehydrogenase family. As to quaternary structure, heterotetramer of two alpha chains (FadB) and two beta chains (FadA).

The catalysed reaction is a (3S)-3-hydroxyacyl-CoA + NAD(+) = a 3-oxoacyl-CoA + NADH + H(+). It catalyses the reaction a (3S)-3-hydroxyacyl-CoA = a (2E)-enoyl-CoA + H2O. The enzyme catalyses a 4-saturated-(3S)-3-hydroxyacyl-CoA = a (3E)-enoyl-CoA + H2O. It carries out the reaction (3S)-3-hydroxybutanoyl-CoA = (3R)-3-hydroxybutanoyl-CoA. The catalysed reaction is a (3Z)-enoyl-CoA = a 4-saturated (2E)-enoyl-CoA. It catalyses the reaction a (3E)-enoyl-CoA = a 4-saturated (2E)-enoyl-CoA. Its pathway is lipid metabolism; fatty acid beta-oxidation. In terms of biological role, involved in the aerobic and anaerobic degradation of long-chain fatty acids via beta-oxidation cycle. Catalyzes the formation of 3-oxoacyl-CoA from enoyl-CoA via L-3-hydroxyacyl-CoA. It can also use D-3-hydroxyacyl-CoA and cis-3-enoyl-CoA as substrate. The protein is Fatty acid oxidation complex subunit alpha of Pseudomonas paraeruginosa (strain DSM 24068 / PA7) (Pseudomonas aeruginosa (strain PA7)).